A 55-amino-acid polypeptide reads, in one-letter code: uncharacterized protein (55 aa).

A helical membrane pass occupies residues 27 to 47 (IFLIYHFSPIYCPYLFLFTVF).

The protein localises to the membrane. This is an uncharacterized protein from Acheta domesticus (House cricket).